A 339-amino-acid chain; its full sequence is Phosphoribosylformylglycinamidine cyclo-ligase (339 aa).

It belongs to the AIR synthase family.

It is found in the cytoplasm. The catalysed reaction is 2-formamido-N(1)-(5-O-phospho-beta-D-ribosyl)acetamidine + ATP = 5-amino-1-(5-phospho-beta-D-ribosyl)imidazole + ADP + phosphate + H(+). The protein operates within purine metabolism; IMP biosynthesis via de novo pathway; 5-amino-1-(5-phospho-D-ribosyl)imidazole from N(2)-formyl-N(1)-(5-phospho-D-ribosyl)glycinamide: step 2/2. This is Phosphoribosylformylglycinamidine cyclo-ligase from Streptococcus thermophilus (strain ATCC BAA-250 / LMG 18311).